Here is an 88-residue protein sequence, read N- to C-terminus: MGIARILSAVLFLSVLFVVTFPTLLSADHHDGRIDTCRLPSDRGRCKASFERWYFNGTTCTKFVYGGYGGNDNRFPTEKARMKRCAKA.

The N-terminal stretch at 1–27 (MGIARILSAVLFLSVLFVVTFPTLLSA) is a signal peptide. A propeptide spanning residues 28-33 (DHHDGR) is cleaved from the precursor. The region spanning 37–85 (CRLPSDRGRCKASFERWYFNGTTCTKFVYGGYGGNDNRFPTEKARMKRC) is the BPTI/Kunitz inhibitor domain. A disulfide bond links C37 and C85.

Belongs to the venom Kunitz-type family. 01 (intermediate) subfamily. As to expression, expressed by the venom gland.

It localises to the secreted. Serine protease inhibitor that inhibits trypsin at a molar ratio of 1:1. In Cyriopagopus hainanus (Chinese bird spider), this protein is Kunitz-type U15-theraphotoxin-Hhn1o.